The following is a 236-amino-acid chain: Proteasome subunit beta type-1 (236 aa).

This sequence belongs to the peptidase T1B family. As to quaternary structure, the 26S proteasome consists of a 20S proteasome core and two 19S regulatory subunits. The 20S proteasome core is composed of 28 subunits that are arranged in four stacked rings, resulting in a barrel-shaped structure. The two end rings are each formed by seven alpha subunits, and the two central rings are each formed by seven beta subunits. The catalytic chamber with the active sites is on the inside of the barrel.

It is found in the cytoplasm. It localises to the nucleus. In terms of biological role, non-catalytic component of the proteasome, a multicatalytic proteinase complex which is characterized by its ability to cleave peptides with Arg, Phe, Tyr, Leu, and Glu adjacent to the leaving group at neutral or slightly basic pH. The proteasome has an ATP-dependent proteolytic activity. The sequence is that of Proteasome subunit beta type-1 (psmB1) from Dictyostelium discoideum (Social amoeba).